The chain runs to 207 residues: MSKNWQDITLALAGIFQATHLVDQVARTGHLPPDAFKCSIESLLDLNPPDTLAVYGGDAANLRTGLEIMRELLRPSSSKYRETLRYGLGVLHLQKKLAGRRDMLGVIGSRIDQAAQQAETFGSTHDNVIANLGGLYSETISTFRYRIQVNGEYQYLQQTRIANQIRALLLAAIRSAMLWRQVGGNRWQLLFYRKQISWQVEDLLRRM.

It belongs to the HflD family.

The protein localises to the cytoplasm. The protein resides in the cell inner membrane. The sequence is that of High frequency lysogenization protein HflD homolog from Cellvibrio japonicus (strain Ueda107) (Pseudomonas fluorescens subsp. cellulosa).